Here is a 209-residue protein sequence, read N- to C-terminus: Interleukin-6 (209 aa).

The first 26 residues, 1-26, serve as a signal peptide directing secretion; sequence RFTSAFSPVAFSLGLLLVMATAFPTP. The tract at residues 28–47 is disordered; it reads PVGGESQADATSNRPPLTSP. The cysteines at positions 69 and 75 are disulfide-linked. Ser78 is subject to Phosphoserine. An intrachain disulfide couples Cys98 to Cys108.

It belongs to the IL-6 superfamily. As to quaternary structure, component of a hexamer of two molecules each of IL6, IL6R and IL6ST; first binds to IL6R to associate with the signaling subunit IL6ST. Interacts with IL6R (via the N-terminal ectodomain); this interaction may be affected by IL6R-binding with SORL1, hence decreasing IL6 cis signaling. Interacts with SORL1 (via the N-terminal ectodomain); this interaction leads to IL6 internalization and lysosomal degradation. May form a trimeric complex with the soluble SORL1 ectodomain and soluble IL6R receptor; this interaction might stabilize circulating IL6, hence promoting IL6 trans signaling.

It is found in the secreted. Its function is as follows. Cytokine with a wide variety of biological functions in immunity, tissue regeneration, and metabolism. Binds to IL6R, then the complex associates to the signaling subunit IL6ST/gp130 to trigger the intracellular IL6-signaling pathway. The interaction with the membrane-bound IL6R and IL6ST stimulates 'classic signaling', whereas the binding of IL6 and soluble IL6R to IL6ST stimulates 'trans-signaling'. Alternatively, 'cluster signaling' occurs when membrane-bound IL6:IL6R complexes on transmitter cells activate IL6ST receptors on neighboring receiver cells. In terms of biological role, IL6 is a potent inducer of the acute phase response. Rapid production of IL6 contributes to host defense during infection and tissue injury, but excessive IL6 synthesis is involved in disease pathology. In the innate immune response, is synthesized by myeloid cells, such as macrophages and dendritic cells, upon recognition of pathogens through toll-like receptors (TLRs) at the site of infection or tissue injury. In the adaptive immune response, is required for the differentiation of B cells into immunoglobulin-secreting cells. Plays a major role in the differentiation of CD4(+) T cell subsets. Essential factor for the development of T follicular helper (Tfh) cells that are required for the induction of germinal-center formation. Required to drive naive CD4(+) T cells to the Th17 lineage. Also required for proliferation of myeloma cells and the survival of plasmablast cells. Acts as an essential factor in bone homeostasis and on vessels directly or indirectly by induction of VEGF, resulting in increased angiogenesis activity and vascular permeability. Induces, through 'trans-signaling' and synergistically with IL1B and TNF, the production of VEGF. Involved in metabolic controls, is discharged into the bloodstream after muscle contraction increasing lipolysis and improving insulin resistance. 'Trans-signaling' in central nervous system also regulates energy and glucose homeostasis. Mediates, through GLP-1, crosstalk between insulin-sensitive tissues, intestinal L cells and pancreatic islets to adapt to changes in insulin demand. Also acts as a myokine. Plays a protective role during liver injury, being required for maintenance of tissue regeneration. Also has a pivotal role in iron metabolism by regulating HAMP/hepcidin expression upon inflammation or bacterial infection. Through activation of IL6ST-YAP-NOTCH pathway, induces inflammation-induced epithelial regeneration. The polypeptide is Interleukin-6 (IL6) (Phoca vitulina (Harbor seal)).